A 224-amino-acid polypeptide reads, in one-letter code: MSIESSSTESSPNTEALQLNGTEVRILGCLIEKQATNPETYPLTLNALVTACNQKTSRDPVMNLTQGQVGQSLRALEGRGLTRLVMGSRADRWEHRVDKGLELVPAQVILTGLLLLRGPQTVNELLTRSNRMHDFEDSEQVVHQLERLIARGLAMLVPRQSGQREDRYMHLLGDPESLQELLAARQQAPERHSASPAANSRIDELEARVAALEERLARLEHAEE.

Belongs to the UPF0502 family.

This Pseudomonas syringae pv. syringae (strain B728a) protein is UPF0502 protein Psyr_2419.